Here is a 538-residue protein sequence, read N- to C-terminus: DALR anticodon-binding domain-containing protein 3 (538 aa).

In terms of assembly, part of a complex containing tRNA(Arg) and METTL2. Interacts with tRNA(Arg)(CCU) and tRNA(Arg)(UCU). Interacts with METTL2.

Its function is as follows. Involved in tRNA methylation. Facilitates the recognition and targeting of tRNA(Arg)(CCU) and tRNA(Arg)(UCU) substrates for N(3)-methylcytidine modification by METTL2. This chain is DALR anticodon-binding domain-containing protein 3 (Dalrd3), found in Mus musculus (Mouse).